We begin with the raw amino-acid sequence, 119 residues long: Large ribosomal subunit protein bL19 (119 aa).

The protein belongs to the bacterial ribosomal protein bL19 family.

Its function is as follows. This protein is located at the 30S-50S ribosomal subunit interface and may play a role in the structure and function of the aminoacyl-tRNA binding site. This Saccharopolyspora erythraea (strain ATCC 11635 / DSM 40517 / JCM 4748 / NBRC 13426 / NCIMB 8594 / NRRL 2338) protein is Large ribosomal subunit protein bL19.